The following is a 395-amino-acid chain: Dual specificity protein phosphatase 4 (395 aa).

Val-2 is subject to N-acetylvaline. Residues 42–160 form the Rhodanese domain; sequence SGGKCLLLDC…FSSEYPEFCS (119 aa). The region spanning 196–337 is the Tyrosine-protein phosphatase domain; sequence GPVEILPFLY…LLQFESQVLT (142 aa). Catalysis depends on Cys-281, which acts as the Phosphocysteine intermediate. Phosphoserine; by MAPK is present on residues Ser-387 and Ser-392.

The protein belongs to the protein-tyrosine phosphatase family. Non-receptor class dual specificity subfamily. In terms of assembly, hollow spherical complex composed of 24 subunits with pseudooctahedral symmetry, has a tetramer as the basic unit. Phosphorylation in the C-terminus by ERK1/2 inhibits proteasomal degradation and stabilizes the protein. In terms of tissue distribution, expressed at moderate levels in nearly all tissues and cells including brain, spleen, and testes with the higher expression in the heart and lung and lower expression in skeletal muscle and kidney. Undetectable in liver. Expressed in many areas of the brain with very strong expression in the hippocampus, piriform cortex, and the suprachiasmatic nucleus.

The protein resides in the nucleus. It catalyses the reaction O-phospho-L-tyrosyl-[protein] + H2O = L-tyrosyl-[protein] + phosphate. The catalysed reaction is O-phospho-L-seryl-[protein] + H2O = L-seryl-[protein] + phosphate. It carries out the reaction O-phospho-L-threonyl-[protein] + H2O = L-threonyl-[protein] + phosphate. In terms of biological role, regulates mitogenic signal transduction by dephosphorylating both Thr and Tyr residues on MAP kinases ERK1 and ERK2. The chain is Dual specificity protein phosphatase 4 (Dusp4) from Rattus norvegicus (Rat).